Reading from the N-terminus, the 279-residue chain is MQNRYLPYGKMNQCENNYGGNDNILNNNNYNNDDRYNNYKNNNIIENNNYTYNNGGGSKNDKKNIQRNNNSNYNNNNNNNNNNNNNNNNNNNNNNNKNNNNNNYNYNKNNYNKKTYTYRGRVRKYATALFFISTDFILMDDIQIQLKKPIHFYQKYLLIHGNSDNGIKIVLPYKYIGEIKLERFETSFNLSFSTTVTTGRQSARYVIKSLKNEFLIDFKNDLSSVFGNVSFFETDHSLQEMYKQIQFPSQSQPSSFSSSSSSSSIQLSPSPSSSSSPKL.

2 disordered regions span residues 50–109 and 249–279; these read YTYN…YNKN and SQSQ…SPKL. Over residues 68–109 the composition is skewed to low complexity; that stretch reads NNNSNYNNNNNNNNNNNNNNNNNNNNNNNKNNNNNNYNYNKN.

This is an uncharacterized protein from Dictyostelium discoideum (Social amoeba).